The following is a 120-amino-acid chain: Small ribosomal subunit protein bS6 (120 aa).

Polar residues predominate over residues 97–112 (SNEPSPILKNQSTENT). The interval 97–120 (SNEPSPILKNQSTENTPVIDVTAN) is disordered.

This sequence belongs to the bacterial ribosomal protein bS6 family.

Binds together with bS18 to 16S ribosomal RNA. The chain is Small ribosomal subunit protein bS6 from Rickettsia bellii (strain RML369-C).